A 274-amino-acid polypeptide reads, in one-letter code: Large ribosomal subunit protein uL2cz/uL2cy (274 aa).

Disordered stretches follow at residues 1–21 and 224–252; these read MAIH…VDSQ and NPVD…GYPA.

It belongs to the universal ribosomal protein uL2 family. As to quaternary structure, part of the 50S ribosomal subunit.

Its subcellular location is the plastid. The protein resides in the chloroplast. In Olimarabidopsis pumila (Dwarf rocket), this protein is Large ribosomal subunit protein uL2cz/uL2cy (rpl2-A).